Reading from the N-terminus, the 376-residue chain is Copper-containing nitrite reductase (376 aa).

The tat-type signal signal peptide spans 1–33 (MSEQFQMTRRSMLAGAAIAGAVTPLIGAVSAHA). Plastocyanin-like domains are found at residues 98-193 (MTFN…IMVL) and 258-359 (GAVG…FAVT). Residues histidine 131, histidine 136, histidine 171, cysteine 172, histidine 181, methionine 186, and histidine 342 each coordinate Cu cation.

The protein belongs to the multicopper oxidase family. In terms of assembly, homotrimer. It depends on Cu(2+) as a cofactor. The cofactor is Cu(+). Requires FAD as cofactor. Predicted to be exported by the Tat system. The position of the signal peptide cleavage has not been experimentally proven.

The protein localises to the periplasm. It carries out the reaction nitric oxide + Fe(III)-[cytochrome c] + H2O = Fe(II)-[cytochrome c] + nitrite + 2 H(+). It participates in nitrogen metabolism; nitrate reduction (denitrification); dinitrogen from nitrate: step 2/4. The protein is Copper-containing nitrite reductase (nirK) of Rhizobium meliloti (strain 1021) (Ensifer meliloti).